The primary structure comprises 483 residues: ATP synthase subunit beta (483 aa).

Gly169–Thr176 serves as a coordination point for ATP.

It belongs to the ATPase alpha/beta chains family. In terms of assembly, F-type ATPases have 2 components, CF(1) - the catalytic core - and CF(0) - the membrane proton channel. CF(1) has five subunits: alpha(3), beta(3), gamma(1), delta(1), epsilon(1). CF(0) has three main subunits: a(1), b(2) and c(9-12). The alpha and beta chains form an alternating ring which encloses part of the gamma chain. CF(1) is attached to CF(0) by a central stalk formed by the gamma and epsilon chains, while a peripheral stalk is formed by the delta and b chains.

Its subcellular location is the cell membrane. It catalyses the reaction ATP + H2O + 4 H(+)(in) = ADP + phosphate + 5 H(+)(out). In terms of biological role, produces ATP from ADP in the presence of a proton gradient across the membrane. The catalytic sites are hosted primarily by the beta subunits. This Corynebacterium glutamicum (strain R) protein is ATP synthase subunit beta.